Consider the following 447-residue polypeptide: Na(+)-translocating NADH-quinone reductase subunit A (447 aa).

It belongs to the NqrA family. In terms of assembly, composed of six subunits; NqrA, NqrB, NqrC, NqrD, NqrE and NqrF.

It carries out the reaction a ubiquinone + n Na(+)(in) + NADH + H(+) = a ubiquinol + n Na(+)(out) + NAD(+). Functionally, NQR complex catalyzes the reduction of ubiquinone-1 to ubiquinol by two successive reactions, coupled with the transport of Na(+) ions from the cytoplasm to the periplasm. NqrA to NqrE are probably involved in the second step, the conversion of ubisemiquinone to ubiquinol. The polypeptide is Na(+)-translocating NADH-quinone reductase subunit A (Neisseria gonorrhoeae (strain NCCP11945)).